The following is a 318-amino-acid chain: Peptidyl-prolyl cis-trans isomerase CPR4 (318 aa).

The first 20 residues, 1-20, serve as a signal peptide directing secretion; it reads MWLKSLLLCLYSLVLCQVHA. The PPIase cyclophilin-type domain maps to 55–225; that stretch reads YFDPVSKSMK…HELRFLYFVL (171 aa). N-linked (GlcNAc...) asparagine glycosylation is present at Asn-166. A helical transmembrane segment spans residues 286–303; the sequence is ISRALMCLTVLGLCFIAY.

The protein resides in the membrane. The enzyme catalyses [protein]-peptidylproline (omega=180) = [protein]-peptidylproline (omega=0). Functionally, PPIases accelerate the folding of proteins. It catalyzes the cis-trans isomerization of proline imidic peptide bonds in oligopeptides. The sequence is that of Peptidyl-prolyl cis-trans isomerase CPR4 (CPR4) from Saccharomyces cerevisiae (strain ATCC 204508 / S288c) (Baker's yeast).